The sequence spans 132 residues: Pro-MCH 1 (132 aa).

Residues Met1 to Ala24 form the signal peptide. A disulfide bridge connects residues Cys120 and Cys129.

This sequence belongs to the melanin-concentrating hormone family. As to expression, pituitary gland. Produced in neurons of lateral basal hypothalamus which project both to the brain and to the neural lobe of the pituitary gland from where MCH is released.

In terms of biological role, plays a role in skin pigmentation by antagonizing the action of melanotropin alpha. Induces melanin concentration within the melanophores. May participate in the control of the hypothalamo-pituitary adrenal gland axis by inhibiting the release of ACTH. This chain is Pro-MCH 1 (mch1), found in Oncorhynchus keta (Chum salmon).